We begin with the raw amino-acid sequence, 236 residues long: Phosphoribosylaminoimidazole-succinocarboxamide synthase (236 aa).

The protein belongs to the SAICAR synthetase family.

It catalyses the reaction 5-amino-1-(5-phospho-D-ribosyl)imidazole-4-carboxylate + L-aspartate + ATP = (2S)-2-[5-amino-1-(5-phospho-beta-D-ribosyl)imidazole-4-carboxamido]succinate + ADP + phosphate + 2 H(+). Its pathway is purine metabolism; IMP biosynthesis via de novo pathway; 5-amino-1-(5-phospho-D-ribosyl)imidazole-4-carboxamide from 5-amino-1-(5-phospho-D-ribosyl)imidazole-4-carboxylate: step 1/2. This is Phosphoribosylaminoimidazole-succinocarboxamide synthase from Coprothermobacter proteolyticus (strain ATCC 35245 / DSM 5265 / OCM 4 / BT).